Reading from the N-terminus, the 103-residue chain is uncharacterized protein (103 aa).

This is an uncharacterized protein from Methanocaldococcus jannaschii (strain ATCC 43067 / DSM 2661 / JAL-1 / JCM 10045 / NBRC 100440) (Methanococcus jannaschii).